The primary structure comprises 168 residues: UPF0478 protein SH1183 (168 aa).

A helical membrane pass occupies residues 7–27 (IAGIIAAIAFLVLCIGIVVVL). The tract at residues 144-168 (YRNTSVGNDANHSNENYTTNVEKNF) is disordered.

This sequence belongs to the UPF0478 family.

It localises to the cell membrane. The protein is UPF0478 protein SH1183 of Staphylococcus haemolyticus (strain JCSC1435).